The sequence spans 277 residues: MEARPCSGVIFTDLDNTLVGPGGEAGEAGEVYLEALDLGYRVVPVTSKSIYEIVELWDSIGVPPGERIALAESGGAIYGPRGSLARPTGFNSEVGLEYTALGKPLASIDALLDSLAETCGAVRLSKADATEAQLITGLPRERAALAARREYLEVIWSRSQECLDTILSTALRYRELTYVHRAPRTVQIAAHRGKGMAIDAALQEPLLRPCAKVVVTAGDSSHDIPIIERGMLAFRVDYNRDWSRLVKPIYMVIPYEAPKAWTMLIETVKTRSNTPSL.

The Nucleophile role is filled by aspartate 13. Mg(2+) contacts are provided by aspartate 13, aspartate 15, and aspartate 219.

Belongs to the HAD-like hydrolase superfamily. MPGP family. The cofactor is Mg(2+).

The protein resides in the cytoplasm. It catalyses the reaction 2-O-(alpha-D-mannosyl)-3-phosphoglycerate + H2O = (2R)-2-O-(alpha-D-mannosyl)-glycerate + phosphate. It participates in carbohydrate biosynthesis; 2-(alpha-D-mannosyl)-D-glycerate biosynthesis; 2-(alpha-D-mannosyl)-D-glycerate from GDP-alpha-D-mannose (MPG route): step 2/2. In terms of biological role, hydrolyzes mannosyl-3-phosphoglycerate (MPG) to form the osmolyte mannosylglycerate (MG). This chain is Mannosyl-3-phosphoglycerate phosphatase, found in Aeropyrum pernix (strain ATCC 700893 / DSM 11879 / JCM 9820 / NBRC 100138 / K1).